The following is a 79-amino-acid chain: Three-finger toxin A2 (79 aa).

Positions 1-21 (MKTLLLTLVVVTIVCLDLGNS) are cleaved as a signal peptide. Intrachain disulfides connect C24/C41, C34/C59, C63/C71, and C72/C77.

Belongs to the three-finger toxin family. Short-chain subfamily. As to expression, expressed by the venom gland.

It is found in the secreted. In Micrurus laticollaris (Balsas coral snake), this protein is Three-finger toxin A2.